The chain runs to 437 residues: Enolase (437 aa).

A (2R)-2-phosphoglycerate-binding site is contributed by Gln-162. The active-site Proton donor is the Glu-204. Mg(2+) is bound by residues Asp-251, Glu-297, and Asp-324. (2R)-2-phosphoglycerate-binding residues include Lys-349, Arg-378, Ser-379, and Lys-400. The active-site Proton acceptor is the Lys-349.

This sequence belongs to the enolase family. Requires Mg(2+) as cofactor.

The protein localises to the cytoplasm. The protein resides in the secreted. It localises to the cell surface. It catalyses the reaction (2R)-2-phosphoglycerate = phosphoenolpyruvate + H2O. It participates in carbohydrate degradation; glycolysis; pyruvate from D-glyceraldehyde 3-phosphate: step 4/5. Catalyzes the reversible conversion of 2-phosphoglycerate (2-PG) into phosphoenolpyruvate (PEP). It is essential for the degradation of carbohydrates via glycolysis. In Prosthecochloris aestuarii (strain DSM 271 / SK 413), this protein is Enolase.